The sequence spans 432 residues: MISAAQLLDELMGRDRNLAPDEKRSNVRWDHESVCKYYLCGFCPAELFTNTRSDLGPCEKIHDENLRKQYEKSSRFMKVGYERDFLRYLQSLLAEVERRIRRGHARLALSQNQQSSGAAGPTGKNEEKIQVLTDKIDVLLQQIEELGSEGKVEEAQGMMKLVEQLKEERELLRSTTSTIESFAAQEKQMEVCEVCGAFLIVGDAQSRVDDHLMGKQHMGYAKIKATVEELKEKLRKRTEEPDRDERLKKEKQEREEREKEREREREERERKRRREEEEREKERARDRERRKRSRSRSRHSSRTSDRRCSRSRDHKRSRSRDRRRSRSRDRRRSRSHDRSERKHRSRSRDRRRSKSRDRKSYKHRSKSRDREQDRKSKEKEKKGSDDKKSSVKSSSREKQSEDTNPESKESDTKNEVNGTSEDIKSEGDTQSN.

M1 bears the N-acetylmethionine mark. 3 positions are modified to phosphoserine: S3, S110, and S115. Residues 124 to 181 (KNEEKIQVLTDKIDVLLQQIEELGSEGKVEEAQGMMKLVEQLKEERELLRSTTSTIES) adopt a coiled-coil conformation. Residue K231 is modified to N6-acetyllysine. Over residues 234–287 (LRKRTEEPDRDERLKKEKQEREEREKEREREREERERKRRREEEEREKERARDR) the composition is skewed to basic and acidic residues. The tract at residues 234–432 (LRKRTEEPDR…IKSEGDTQSN (199 aa)) is disordered. The span at 288–301 (ERRKRSRSRSRHSS) shows a compositional bias: basic residues. Over residues 302–311 (RTSDRRCSRS) the composition is skewed to basic and acidic residues. Over residues 312-367 (RDHKRSRSRDRRRSRSRDRRRSRSHDRSERKHRSRSRDRRRSKSRDRKSYKHRSKS) the composition is skewed to basic residues. Residues 368-414 (RDREQDRKSKEKEKKGSDDKKSSVKSSSREKQSEDTNPESKESDTKN) are compositionally biased toward basic and acidic residues. At S420 the chain carries Phosphoserine. The span at 421–432 (EDIKSEGDTQSN) shows a compositional bias: basic and acidic residues. A Glycyl lysine isopeptide (Lys-Gly) (interchain with G-Cter in SUMO1); alternate cross-link involves residue K424. K424 participates in a covalent cross-link: Glycyl lysine isopeptide (Lys-Gly) (interchain with G-Cter in SUMO2); alternate. Phosphoserine is present on residues S425 and S431.

The protein belongs to the Luc7 family. In terms of assembly, may interact with SFRS1 and form homodimers. Interacts with JMJD6. Interacts with RBM25. Interacts with RSRC1 (via Arg/Ser-rich domain). Interacts with RRP1B.

It localises to the nucleus speckle. Functionally, binds cAMP regulatory element DNA sequence. May play a role in RNA splicing. This chain is Luc7-like protein 3 (Luc7l3), found in Mus musculus (Mouse).